Consider the following 263-residue polypeptide: Purine nucleoside phosphorylase SAS1121 (263 aa).

3 residues coordinate Zn(2+): His79, Cys124, and His141.

It belongs to the purine nucleoside phosphorylase YfiH/LACC1 family. As to quaternary structure, homodimer. Cu(2+) is required as a cofactor. It depends on Zn(2+) as a cofactor.

It carries out the reaction adenosine + phosphate = alpha-D-ribose 1-phosphate + adenine. The catalysed reaction is S-methyl-5'-thioadenosine + phosphate = 5-(methylsulfanyl)-alpha-D-ribose 1-phosphate + adenine. It catalyses the reaction inosine + phosphate = alpha-D-ribose 1-phosphate + hypoxanthine. The enzyme catalyses adenosine + H2O + H(+) = inosine + NH4(+). Purine nucleoside enzyme that catalyzes the phosphorolysis of adenosine and inosine nucleosides, yielding D-ribose 1-phosphate and the respective free bases, adenine and hypoxanthine. Also catalyzes the phosphorolysis of S-methyl-5'-thioadenosine into adenine and S-methyl-5-thio-alpha-D-ribose 1-phosphate. Also has adenosine deaminase activity. The chain is Purine nucleoside phosphorylase SAS1121 from Staphylococcus aureus (strain MSSA476).